Reading from the N-terminus, the 395-residue chain is Transcription termination/antitermination protein NusA (395 aa).

Positions 137-201 constitute an S1 motif domain; sequence NSVLMGQVIL…TKKGLLLELS (65 aa). 2 KH domains span residues 243 to 291 and 331 to 378; these read SHNS…TLAL and KVRL…NENE.

This sequence belongs to the NusA family. Monomer. Binds directly to the core enzyme of the DNA-dependent RNA polymerase and to nascent RNA.

Its subcellular location is the cytoplasm. Participates in both transcription termination and antitermination. This chain is Transcription termination/antitermination protein NusA, found in Helicobacter pylori (strain J99 / ATCC 700824) (Campylobacter pylori J99).